The following is a 342-amino-acid chain: UDP-3-O-acylglucosamine N-acyltransferase (342 aa).

The active-site Proton acceptor is the histidine 238.

It belongs to the transferase hexapeptide repeat family. LpxD subfamily. In terms of assembly, homotrimer.

The enzyme catalyses a UDP-3-O-[(3R)-3-hydroxyacyl]-alpha-D-glucosamine + a (3R)-hydroxyacyl-[ACP] = a UDP-2-N,3-O-bis[(3R)-3-hydroxyacyl]-alpha-D-glucosamine + holo-[ACP] + H(+). It functions in the pathway bacterial outer membrane biogenesis; LPS lipid A biosynthesis. Its function is as follows. Catalyzes the N-acylation of UDP-3-O-acylglucosamine using 3-hydroxyacyl-ACP as the acyl donor. Is involved in the biosynthesis of lipid A, a phosphorylated glycolipid that anchors the lipopolysaccharide to the outer membrane of the cell. This is UDP-3-O-acylglucosamine N-acyltransferase from Tolumonas auensis (strain DSM 9187 / NBRC 110442 / TA 4).